Reading from the N-terminus, the 155-residue chain is Troponin C, isoform 3 (155 aa).

4 EF-hand domains span residues 11–46 (EQIAVLQKAFNSFDHQKTGSIPTEMVADILRLMGQP), 47–82 (FDKKILEELIEEVDEDKSGRLEFGEFVQLAAKFIVE), 87–122 (AMQKELREAFRLYDKQGNGFIPTTCLKEILKELDDQ), and 123–155 (LTEQELDIMIEEIDSDGSGTVDFDEFMEMMTGE). Ca(2+) contacts are provided by Asp60, Asp62, Ser64, Arg66, and Glu71. Asp136, Asp138, Ser140, Thr142, and Glu147 together coordinate Ca(2+).

The protein belongs to the troponin C family. In terms of tissue distribution, present in both larval and adult muscles.

The protein is Troponin C, isoform 3 (TpnC73F) of Drosophila melanogaster (Fruit fly).